A 387-amino-acid polypeptide reads, in one-letter code: Pepsin A (387 aa).

The first 16 residues, 1-16 (MKKLLLLLGLVALSEC), serve as a signal peptide directing secretion. Positions 17-61 (LYKVPLVKKKSLRQNLIENGLLKDFLAKHNVNPASKYFPTEAATE) are cleaved as a propeptide — activation peptide. The Peptidase A1 domain occupies 75 to 384 (YFGTIGIGTP…DRGNNRVGLA (310 aa)). Asp93 is a catalytic residue. Cys106 and Cys111 are oxidised to a cystine. Ser129 carries the post-translational modification Phosphoserine. A disulfide bond links Cys267 and Cys271. Residue Asp276 is part of the active site. Residues Cys310 and Cys343 are joined by a disulfide bond.

This sequence belongs to the peptidase A1 family.

It localises to the secreted. The enzyme catalyses Preferential cleavage: hydrophobic, preferably aromatic, residues in P1 and P1' positions. Cleaves 1-Phe-|-Val-2, 4-Gln-|-His-5, 13-Glu-|-Ala-14, 14-Ala-|-Leu-15, 15-Leu-|-Tyr-16, 16-Tyr-|-Leu-17, 23-Gly-|-Phe-24, 24-Phe-|-Phe-25 and 25-Phe-|-Tyr-26 bonds in the B chain of insulin.. Functionally, shows particularly broad specificity; although bonds involving phenylalanine and leucine are preferred, many others are also cleaved to some extent. The polypeptide is Pepsin A (PGA) (Suncus murinus (Asian house shrew)).